The following is a 448-amino-acid chain: Adenylosuccinate synthetase (448 aa).

Residues glycine 36–lysine 42 and glycine 64–threonine 66 each bind GTP. Catalysis depends on aspartate 37, which acts as the Proton acceptor. The Mg(2+) site is built by aspartate 37 and glycine 64. IMP-binding positions include aspartate 37–lysine 40, asparagine 62–histidine 65, threonine 154, arginine 168, asparagine 246, threonine 261, and arginine 325. Histidine 65 functions as the Proton donor in the catalytic mechanism. Valine 321–arginine 327 provides a ligand contact to substrate. GTP contacts are provided by residues arginine 327, lysine 353 to aspartate 355, and glycine 436 to glycine 438.

This sequence belongs to the adenylosuccinate synthetase family. In terms of assembly, homodimer. The cofactor is Mg(2+).

The protein localises to the cytoplasm. The catalysed reaction is IMP + L-aspartate + GTP = N(6)-(1,2-dicarboxyethyl)-AMP + GDP + phosphate + 2 H(+). It functions in the pathway purine metabolism; AMP biosynthesis via de novo pathway; AMP from IMP: step 1/2. Functionally, plays an important role in the de novo pathway and in the salvage pathway of purine nucleotide biosynthesis. Catalyzes the first committed step in the biosynthesis of AMP from IMP. The polypeptide is Adenylosuccinate synthetase (Drosophila mojavensis (Fruit fly)).